The following is a 289-amino-acid chain: 4-hydroxybenzoate octaprenyltransferase (289 aa).

8 helical membrane-spanning segments follow: residues 21 to 40, 95 to 115, 116 to 136, 138 to 158, 161 to 181, 213 to 233, 236 to 256, and 268 to 288; these read PIGT…LAAG, VLAL…TMNS, LTIA…FMKR, IPIP…MAYA, ANAL…WTIA, IIGV…QLMG, AWYY…QRLI, and FLNN…NYLL.

This sequence belongs to the UbiA prenyltransferase family. Mg(2+) is required as a cofactor.

The protein localises to the cell inner membrane. The catalysed reaction is all-trans-octaprenyl diphosphate + 4-hydroxybenzoate = 4-hydroxy-3-(all-trans-octaprenyl)benzoate + diphosphate. Its pathway is cofactor biosynthesis; ubiquinone biosynthesis. In terms of biological role, catalyzes the prenylation of para-hydroxybenzoate (PHB) with an all-trans polyprenyl group. Mediates the second step in the final reaction sequence of ubiquinone-8 (UQ-8) biosynthesis, which is the condensation of the polyisoprenoid side chain with PHB, generating the first membrane-bound Q intermediate 3-octaprenyl-4-hydroxybenzoate. This Aeromonas salmonicida (strain A449) protein is 4-hydroxybenzoate octaprenyltransferase.